The sequence spans 410 residues: Putative odorant receptor 65c (410 aa).

Residues 1–59 (MDIRGNVHRFVKFYIDGWKHFRDPTMESSYSAVYYWREQMKAMFLYTTSKERQMPYRSS) lie on the Cytoplasmic side of the membrane. A helical transmembrane segment spans residues 60–80 (WHTLVIIQATVCFLTMCYGVT). At 81–92 (ESLGDKVQMGRD) the chain is on the extracellular side. A helical transmembrane segment spans residues 93-113 (IAFIIGFFYIAFKIYYFQWYG). Over 114-148 (DELDEVVEALETFHPWAQKGPGAVDYRTAKRWYFT) the chain is Cytoplasmic. The helical transmembrane segment at 149 to 169 (LAFFLASSWLVFLCIFILLLI) threads the bilayer. At 170–222 (TSPLWVHQQILPLHAAFPFQWHEKSIHPISHAFIYLFQTWNVMYFLTWLVCIE) the chain is on the extracellular side. Residues 223-243 (GLSVSIYVEITFAIEVLCLEL) traverse the membrane as a helical segment. The Cytoplasmic portion of the chain corresponds to 244 to 279 (RHLHQRCHGYEQLRLETNRLVQFHQKIVHILDHTNK). The chain crosses the membrane as a helical span at residues 280–300 (VFHGTLIMQMGVNFFLVSLSV). Topologically, residues 301 to 312 (LEAMEARKDPKV) are extracellular. Residues 313–333 (VAQFAVLMLLALGHLSMWSYF) traverse the membrane as a helical segment. At 334 to 385 (GDLLSQKSLTISEAAYEAYDPIKGSKDVYRDLCLIIRRGQEPLIMRASPFPS) the chain is on the cytoplasmic side. Residues 386 to 406 (FNFINYSAILNQCYGILTFLL) traverse the membrane as a helical segment. Topologically, residues 407-410 (KTLD) are extracellular.

The protein belongs to the insect chemoreceptor superfamily. Heteromeric odorant receptor channel (TC 1.A.69) family. Or49a subfamily. As to quaternary structure, interacts with Orco. Complexes exist early in the endomembrane system in olfactory sensory neurons (OSNs), coupling these complexes to the conserved ciliary trafficking pathway.

It localises to the cell membrane. Its function is as follows. Odorant receptor which mediates acceptance or avoidance behavior, depending on its substrates. The odorant receptor repertoire encodes a large collection of odor stimuli that vary widely in identity, intensity, and duration. May form a complex with Orco to form odorant-sensing units, providing sensitive and prolonged odorant signaling and calcium permeability. This Drosophila melanogaster (Fruit fly) protein is Putative odorant receptor 65c (Or65c).